Here is a 391-residue protein sequence, read N- to C-terminus: MKIVLAYSGGLDTTVAIKWLSETFHAEVISVSVDVGQKDDFKKIEERAYKAGSAKHYLVDAKREFAENFALKDIKMNGLYEEVYPLATALARPLIAEKVAEVAKKEGTEYVAHGSTSKGNDQVRFDLALKTALDNVKIIAPARIWKMTREDEIAYARERGIPIKTESSKYSIDENLWGRSIEGDIISDPASEVPEDAFEWTAVRKQDKLKLSVEFEKGVPVRVNGEKLDPVKLISLLNEEVGSRGFGRVEHLENRVVGFKSREVYEAPAALALIAAHKDLEKTVLTPLELRFKRHLDSLWSDLVYQGLWYEPLRNTLELAGDEINKWVSGEVKLEVDLKSLRVVGRTSPYSPYSEKISSYNKGWYPSDEEARGFIEIWGMHSLLTRKARYG.

Position 6 to 14 (6 to 14 (AYSGGLDTT)) interacts with ATP. Position 84 (Tyr-84) interacts with L-citrulline. Residue Gly-114 participates in ATP binding. 3 residues coordinate L-aspartate: Thr-116, Asn-120, and Asp-121. Asn-120 contacts L-citrulline. 5 residues coordinate L-citrulline: Arg-124, Ser-171, Ser-180, Glu-253, and Tyr-265.

Belongs to the argininosuccinate synthase family. Type 1 subfamily. Homotetramer.

It is found in the cytoplasm. It catalyses the reaction L-citrulline + L-aspartate + ATP = 2-(N(omega)-L-arginino)succinate + AMP + diphosphate + H(+). The protein operates within amino-acid biosynthesis; L-arginine biosynthesis; L-arginine from L-ornithine and carbamoyl phosphate: step 2/3. The chain is Argininosuccinate synthase from Metallosphaera sedula (strain ATCC 51363 / DSM 5348 / JCM 9185 / NBRC 15509 / TH2).